Consider the following 576-residue polypeptide: uncharacterized protein (576 aa).

Composition is skewed to polar residues over residues 1–21 and 28–40; these read MSTNPNAGIQPLTNSISQSAS and HTTSHESVSTYQL. Positions 1–40 are disordered; it reads MSTNPNAGIQPLTNSISQSASAHPELYHTTSHESVSTYQL. The next 12 membrane-spanning stretches (helical) occupy residues 149-169, 173-193, 200-220, 231-251, 261-281, 291-311, 366-386, 401-421, 446-466, 472-492, 503-525, and 542-562; these read FASSVFSVPAEAITTIFHISL, LLTMTVFLCGYIAGPIVWAPL, KLPLLIGMFGFGIFNISVAVA, FFSGFFASAPLTVVAAAFADM, ITIFAALVFDGPLVSPIIGGF, WTEYITSFMGFFALVIVYLFC, PIVFLITLYSSFVYAILYLLL, MGVAELPYIGLLVGVFIGSAI, LPPMMIGCFMFPAGIFWLSWS, VHWIVPTLSGLATGCGILLIF, YLFRAASAVAANTIMRSAMAAGF, and GSLLGFIAVALIPMPFAFFFF.

The protein belongs to the major facilitator superfamily. CAR1 family.

It localises to the endoplasmic reticulum. Its subcellular location is the golgi apparatus. The protein resides in the membrane. This is an uncharacterized protein from Schizosaccharomyces pombe (strain 972 / ATCC 24843) (Fission yeast).